We begin with the raw amino-acid sequence, 737 residues long: Catalase-peroxidase (737 aa).

Positions 1–29 are disordered; it reads MTDSPDATTGGCPVAHGDRLPHPTQGGAN. The segment at residues 101–227 is a cross-link (tryptophyl-tyrosyl-methioninium (Trp-Tyr) (with M-253)); it reads WHSAGTYRVS…LGATHMGLIY (127 aa). His102 acts as the Proton acceptor in catalysis. The tryptophyl-tyrosyl-methioninium (Tyr-Met) (with W-101) cross-link spans 227–253; the sequence is YVNPEGPEGKPDPVAAARDIRETFGRM. His268 is a heme b binding site.

It belongs to the peroxidase family. Peroxidase/catalase subfamily. Homodimer or homotetramer. Heme b serves as cofactor. Post-translationally, formation of the three residue Trp-Tyr-Met cross-link is important for the catalase, but not the peroxidase activity of the enzyme.

The enzyme catalyses H2O2 + AH2 = A + 2 H2O. The catalysed reaction is 2 H2O2 = O2 + 2 H2O. In terms of biological role, bifunctional enzyme with both catalase and broad-spectrum peroxidase activity. This Saccharopolyspora erythraea (strain ATCC 11635 / DSM 40517 / JCM 4748 / NBRC 13426 / NCIMB 8594 / NRRL 2338) protein is Catalase-peroxidase.